Reading from the N-terminus, the 308-residue chain is Protein translocase subunit SecF (308 aa).

Helical transmembrane passes span 28-48, 140-160, 164-184, 194-214, 246-266, and 272-292; these read SIILSLISFIWIGIYKFNFGI, IEAGAMAMLFSFLAIMVYIWV, WYFGFGILIALVHDVILALGF, LSTIAAVLTIIGYSVNDSVVI, ILTVITTLLANLALILFGGEA, and ILVFFGIIVGTYSSIFISAPI.

This sequence belongs to the SecD/SecF family. SecF subfamily. In terms of assembly, forms a complex with SecD. Part of the essential Sec protein translocation apparatus which comprises SecA, SecYEG and auxiliary proteins SecDF-YajC and YidC.

It is found in the cell inner membrane. Functionally, part of the Sec protein translocase complex. Interacts with the SecYEG preprotein conducting channel. SecDF uses the proton motive force (PMF) to complete protein translocation after the ATP-dependent function of SecA. This chain is Protein translocase subunit SecF, found in Rickettsia rickettsii (strain Sheila Smith).